Here is a 40-residue protein sequence, read N- to C-terminus: Alpha-1B-glycoprotein (40 aa).

N23 carries an N-linked (GlcNAc...) asparagine glycan.

As to quaternary structure, interacts with CRISP3. In terms of tissue distribution, plasma.

The protein localises to the secreted. This Sus scrofa (Pig) protein is Alpha-1B-glycoprotein (A1BG).